A 278-amino-acid chain; its full sequence is Ribosomal RNA small subunit methyltransferase A (278 aa).

S-adenosyl-L-methionine is bound by residues N25, L27, G52, E73, D97, and N117.

It belongs to the class I-like SAM-binding methyltransferase superfamily. rRNA adenine N(6)-methyltransferase family. RsmA subfamily.

Its subcellular location is the cytoplasm. It catalyses the reaction adenosine(1518)/adenosine(1519) in 16S rRNA + 4 S-adenosyl-L-methionine = N(6)-dimethyladenosine(1518)/N(6)-dimethyladenosine(1519) in 16S rRNA + 4 S-adenosyl-L-homocysteine + 4 H(+). Functionally, specifically dimethylates two adjacent adenosines (A1518 and A1519) in the loop of a conserved hairpin near the 3'-end of 16S rRNA in the 30S particle. May play a critical role in biogenesis of 30S subunits. In Desulfitobacterium hafniense (strain DSM 10664 / DCB-2), this protein is Ribosomal RNA small subunit methyltransferase A.